The primary structure comprises 354 residues: Protein REDOX 1 (354 aa).

Cysteine 44 contacts Zn(2+). An NAD(+)-binding site is contributed by 45 to 49 (HSDLH). Residues histidine 66, cysteine 97, cysteine 100, cysteine 103, and cysteine 111 each coordinate Zn(2+). NAD(+) is bound by residues 185 to 190 (GLGGLG), lysine 214, 271 to 273 (VGA), 295 to 297 (SAV), and arginine 340.

Belongs to the zinc-containing alcohol dehydrogenase family. Requires Zn(2+) as cofactor. Expressed in leaf epidermis.

The catalysed reaction is 3,17-didehydrostemmadenine + NADPH + H2O = (16S)-deshydroxymethyl-stemmadenine + formate + NADP(+). It catalyses the reaction 3,17-didehydrostemmadenine + NADPH + H2O = (16R)-deshydroxymethyl-stemmadenine + formate + NADP(+). It carries out the reaction 17-dehydrostemmadenine + NADP(+) = 3,17-didehydrostemmadenine + NADPH. The protein operates within alkaloid biosynthesis. Its function is as follows. Component of iboga and aspidosperma monoterpenoid indole alkaloids (MIAs, e.g. tabersonine and catharanthine) biosynthesis pathway from 19E-geissoschizine. Catalyzes the first oxidation step of the unstable intermediate product resulting from the reaction triggered by the geissoschizine oxidase (GO) in the stemmadenine biosynthesis process from 19E-geissoschizine. The protein is Protein REDOX 1 of Catharanthus roseus (Madagascar periwinkle).